The sequence spans 206 residues: Flavin reductase (NADPH) (206 aa).

The NADP(+) site is built by G10, T12, G13, Q14, T15, R35, S38, and R39. Phosphoserine is present on S42. The NADP(+) site is built by D54, V55, L75, G76, and R78. A Phosphoserine modification is found at S82. NADP(+)-binding residues include M87, C109, H132, H153, and I154. Residue C109 is the S-nitroso-cysteine intermediate; for S-nitroso-CoA-dependent nitrosyltransferase activity of the active site. The active-site S-nitroso-cysteine intermediate; for S-nitroso-CoA-dependent nitrosyltransferase activity is C188.

The protein belongs to the BLVRB family. As to quaternary structure, monomer. Predominantly expressed in liver and erythrocytes. At lower levels in heart, lung, adrenal gland and cerebrum. Expressed in adult red blood cells.

The protein resides in the cytoplasm. The catalysed reaction is reduced riboflavin + NADP(+) = riboflavin + NADPH + 2 H(+). It carries out the reaction bilirubin IXbeta + NADP(+) = biliverdin IXbeta + NADPH + H(+). It catalyses the reaction FMNH2 + NAD(+) = FMN + NADH + 2 H(+). The enzyme catalyses FMNH2 + NADP(+) = FMN + NADPH + 2 H(+). The catalysed reaction is S-nitroso-CoA + L-cysteinyl-[protein] = S-nitroso-L-cysteinyl-[protein] + CoA. It carries out the reaction L-cysteinyl-[SCAN] + S-nitroso-CoA = S-nitroso-L-cysteinyl-[SCAN] + CoA. It catalyses the reaction S-nitroso-L-cysteinyl-[SCAN] + L-cysteinyl-[protein] = L-cysteinyl-[SCAN] + S-nitroso-L-cysteinyl-[protein]. Mesobiliverdin acts as a competitive inhibitor for flavin reduction, indicating that flavin and tetrapyrrole substrates compete for the same site. Inhibited by a wide range of xanthene-based drugs, such as phloxine B, erythrosin B, tamibarotene, sulfasalazine, olsalazine, febuxostat, ataluren (PTC124) and deferasirox. Functionally, enzyme that can both act as a NAD(P)H-dependent reductase and a S-nitroso-CoA-dependent nitrosyltransferase. Promotes fetal heme degradation during development. Also expressed in adult tissues, where it acts as a regulator of hematopoiesis, intermediary metabolism (glutaminolysis, glycolysis, TCA cycle and pentose phosphate pathway) and insulin signaling. Has a broad specificity oxidoreductase activity by catalyzing the NAD(P)H-dependent reduction of a variety of flavins, such as riboflavin, FAD or FMN, biliverdins, methemoglobin and PQQ (pyrroloquinoline quinone). Contributes to fetal heme catabolism by catalyzing reduction of biliverdin IXbeta into bilirubin IXbeta in the liver. Biliverdin IXbeta, which constitutes the major heme catabolite in the fetus is not present in adult. Does not reduce bilirubin IXalpha. Can also reduce the complexed Fe(3+) iron to Fe(2+) in the presence of FMN and NADPH. Acts as a protein nitrosyltransferase by catalyzing nitrosylation of cysteine residues of target proteins, such as HMOX2, INSR and IRS1. S-nitroso-CoA-dependent nitrosyltransferase activity is mediated via a 'ping-pong' mechanism: BLVRB first associates with both S-nitroso-CoA and protein substrate, nitric oxide group is then transferred from S-nitroso-CoA to Cys-109 and Cys-188 residues of BLVRB and from S-nitroso-BLVRB to the protein substrate. Inhibits insulin signaling by mediating nitrosylation of INSR and IRS1, leading to their inhibition. The sequence is that of Flavin reductase (NADPH) from Homo sapiens (Human).